Reading from the N-terminus, the 795-residue chain is Phenylalanine--tRNA ligase beta subunit (795 aa).

Residues 39-148 enclose the tRNA-binding domain; sequence AGSFHGVVVG…ADAPIGTDIR (110 aa). One can recognise a B5 domain in the interval 401-476; sequence PKRATITLRR…RVYGYNNIPD (76 aa). Residues D454, D460, E463, and E464 each contribute to the Mg(2+) site. Residues 701–794 enclose the FDX-ACB domain; that stretch reads SRFPANRRDI…LKERFQASLR (94 aa).

The protein belongs to the phenylalanyl-tRNA synthetase beta subunit family. Type 1 subfamily. As to quaternary structure, tetramer of two alpha and two beta subunits. Requires Mg(2+) as cofactor.

The protein resides in the cytoplasm. It catalyses the reaction tRNA(Phe) + L-phenylalanine + ATP = L-phenylalanyl-tRNA(Phe) + AMP + diphosphate + H(+). In Shigella flexneri, this protein is Phenylalanine--tRNA ligase beta subunit.